The chain runs to 356 residues: Alanine racemase, catabolic (356 aa).

The active-site Proton acceptor; specific for D-alanine is K35. K35 carries the N6-(pyridoxal phosphate)lysine modification. R130 is a binding site for substrate. The active-site Proton acceptor; specific for L-alanine is the Y253. M301 provides a ligand contact to substrate.

The protein belongs to the alanine racemase family. Pyridoxal 5'-phosphate is required as a cofactor.

It catalyses the reaction L-alanine = D-alanine. Its function is as follows. Isomerizes L-alanine to D-alanine which is then oxidized to pyruvate by DadA. This Klebsiella aerogenes (Enterobacter aerogenes) protein is Alanine racemase, catabolic (dadB).